The chain runs to 92 residues: Small ribosomal subunit protein bS18 (92 aa).

The protein belongs to the bacterial ribosomal protein bS18 family. Part of the 30S ribosomal subunit. Forms a tight heterodimer with protein bS6.

Functionally, binds as a heterodimer with protein bS6 to the central domain of the 16S rRNA, where it helps stabilize the platform of the 30S subunit. In Cupriavidus necator (strain ATCC 17699 / DSM 428 / KCTC 22496 / NCIMB 10442 / H16 / Stanier 337) (Ralstonia eutropha), this protein is Small ribosomal subunit protein bS18.